A 406-amino-acid polypeptide reads, in one-letter code: 4-O-methyl-glucuronoyl methylesterase (406 aa).

Positions 1–17 (MAFRWLSFLLLALPVLA) are cleaved as a signal peptide. Cysteines 31 and 64 form a disulfide. Asparagine 100, asparagine 110, asparagine 122, and asparagine 178 each carry an N-linked (GlcNAc...) asparagine glycan. Positions 215–220 (GCSRDG) match the GXSYXG catalytic site motif motif. Intrachain disulfides connect cysteine 216–cysteine 352 and cysteine 248–cysteine 324. The active-site Nucleophile is serine 217. Substrate contacts are provided by lysine 221, glutamine 263, and glutamate 271. N-linked (GlcNAc...) asparagine glycosylation occurs at asparagine 285. A substrate-binding site is contributed by tryptophan 315. N-linked (GlcNAc...) asparagine glycosylation is present at asparagine 348. Histidine 351 (proton donor/acceptor) is an active-site residue. 3 N-linked (GlcNAc...) asparagine glycosylation sites follow: asparagine 376, asparagine 387, and asparagine 398.

It belongs to the carbohydrate esterase 15 (CE15) family.

It is found in the secreted. The enzyme catalyses a 4-O-methyl-alpha-D-glucuronosyl ester derivative + H2O = 4-O-methyl-alpha-D-glucuronate derivative + an alcohol + H(+). Its function is as follows. Glucuronoyl esterase which may play a significant role in biomass degradation, as it is considered to disconnect hemicellulose from lignin through the hydrolysis of the ester bond between 4-O-methyl-D-glucuronic acid residues of glucuronoxylans and aromatic alcohols of lignin. The sequence is that of 4-O-methyl-glucuronoyl methylesterase from Phanerochaete carnosa (strain HHB-10118-sp) (White-rot fungus).